We begin with the raw amino-acid sequence, 102 residues long: Urease subunit beta (102 aa).

The protein belongs to the urease beta subunit family. In terms of assembly, heterotrimer of UreA (gamma), UreB (beta) and UreC (alpha) subunits. Three heterotrimers associate to form the active enzyme.

The protein resides in the cytoplasm. The enzyme catalyses urea + 2 H2O + H(+) = hydrogencarbonate + 2 NH4(+). It functions in the pathway nitrogen metabolism; urea degradation; CO(2) and NH(3) from urea (urease route): step 1/1. This Acinetobacter baumannii (strain AB307-0294) protein is Urease subunit beta.